The sequence spans 304 residues: Probable porphobilinogen deaminase (304 aa).

S-(dipyrrolylmethanemethyl)cysteine is present on Cys-240.

Belongs to the HMBS family. Dipyrromethane is required as a cofactor.

It carries out the reaction 4 porphobilinogen + H2O = hydroxymethylbilane + 4 NH4(+). Its pathway is porphyrin-containing compound metabolism; protoporphyrin-IX biosynthesis; coproporphyrinogen-III from 5-aminolevulinate: step 2/4. Its function is as follows. Tetrapolymerization of the monopyrrole PBG into the hydroxymethylbilane pre-uroporphyrinogen in several discrete steps. The polypeptide is Probable porphobilinogen deaminase (Ignicoccus hospitalis (strain KIN4/I / DSM 18386 / JCM 14125)).